The following is a 662-amino-acid chain: p-hydroxybenzoic acid efflux pump subunit AaeB (662 aa).

Transmembrane regions (helical) follow at residues 22 to 42 (FAFKLSFAIVLSLFLGFHLQL), 52 to 72 (AAIVAAGPAFAAGGEPFSGAI), 76 to 96 (GMLRIIGTFIGCIGALVIIIA), 102 to 122 (VVMLMLCCIWAGLCTWVSSLV), 129 to 149 (IFGLAGYTALIIIVSTQGTPL), 161 to 181 (EIVLGIVCAILADLLFSPRSI), 378 to 398 (LFWLSTGWTSGSVCMVMIAVV), 415 to 435 (FLFGTIYALPLGALMFMFIMP), 439 to 459 (QSMLLLCLSLGGMAFFLGLEV), 465 to 485 (GSLGALASTINILVLDNPMTF), and 491 to 511 (LDSAIGQIIGCFLALMVIMLI).

Belongs to the aromatic acid exporter ArAE (TC 2.A.85) family.

It is found in the cell inner membrane. Functionally, forms an efflux pump with AaeA. Could function as a metabolic relief valve, allowing to eliminate certain compounds when they accumulate to high levels in the cell. In Pectobacterium atrosepticum (strain SCRI 1043 / ATCC BAA-672) (Erwinia carotovora subsp. atroseptica), this protein is p-hydroxybenzoic acid efflux pump subunit AaeB.